The following is a 99-amino-acid chain: UPF0125 protein BU253 (99 aa).

The protein belongs to the UPF0125 (RnfH) family.

The protein is UPF0125 protein BU253 of Buchnera aphidicola subsp. Acyrthosiphon pisum (strain APS) (Acyrthosiphon pisum symbiotic bacterium).